Consider the following 388-residue polypeptide: L-cysteine desulfidase (388 aa).

Cys-25 serves as the catalytic Proton acceptor. Cys-282, Cys-322, and Cys-329 together coordinate [4Fe-4S] cluster.

This sequence belongs to the L-cysteine desulfidase family. In terms of assembly, homotrimer. Requires [4Fe-4S] cluster as cofactor.

It carries out the reaction L-cysteine + H2O = hydrogen sulfide + pyruvate + NH4(+) + H(+). In terms of biological role, catalyzes the cleavage of L-cysteine to form 2-aminoprop-2-enoate and sulfide. The former then spontaneously hydrolyzes to pyruvate and NH(3). May be responsible for the production of sulfide required for the biosynthesis of iron-sulfur centers in this archaea. Is very specific for L-cysteine, with no activity being detected with D-cysteine, L-homocysteine, 3-mercaptopropionate (cysteine without the amino group), cysteamine (cysteine without the carboxylate), or mercaptolactate (the hydroxyl analog of cysteine). This Methanocaldococcus jannaschii (strain ATCC 43067 / DSM 2661 / JAL-1 / JCM 10045 / NBRC 100440) (Methanococcus jannaschii) protein is L-cysteine desulfidase.